Reading from the N-terminus, the 782-residue chain is Fibrinogen alpha chain (782 aa).

The first 19 residues, 1–19 (MLSLRVACLILSLASTVWT), serve as a signal peptide directing secretion. The stretch at 68–547 (GCRMKGLIDE…KRGRARTMRD (480 aa)) forms a coiled coil. Basic and acidic residues predominate over residues 264–283 (RPGKDGASRGDLPGDSRGDS). The segment at 264–374 (RPGKDGASRG…PATRKEYHTG (111 aa)) is disordered. S279 is modified (phosphoserine). Residues 311 to 323 (SGSGSDGNWGSGT) are compositionally biased toward gly residues. Low complexity-rich tracts occupy residues 324-344 (TGSD…SGSG) and 354-364 (GEFSEFGGSSS). S326 is subject to Phosphoserine. C404 and C434 are joined by a disulfide. At S470 the chain carries Phosphoserine. The residue at position 499 (P499) is a 4-hydroxyproline; by P4HA1. Over residues 522–536 (DEAASEAHQEGDTRT) the composition is skewed to basic and acidic residues. Residues 522 to 542 (DEAASEAHQEGDTRTTKRGRA) form a disordered region. The residue at position 526 (S526) is a Phosphoserine. In terms of domain architecture, Fibrinogen C-terminal spans 539-780 (RGRARTMRDC…AVRMKIRPLV (242 aa)). N602 carries an N-linked (GlcNAc...) asparagine glycan. Ca(2+) contacts are provided by D707, D709, W711, and E713. A disulfide bond links C715 and C728.

As to quaternary structure, heterohexamer; disulfide linked. Contains 2 sets of 3 non-identical chains (alpha, beta and gamma). The 2 heterotrimers are in head to head conformation with the N-termini in a small central domain. Post-translationally, conversion of fibrinogen to fibrin is triggered by thrombin, which cleaves fibrinopeptides A and B from alpha and beta chains, and thus exposes the N-terminal polymerization sites responsible for the formation of the soft clot. The soft clot is converted into the hard clot by factor XIIIA which catalyzes the epsilon-(gamma-glutamyl)lysine cross-linking between gamma chains (stronger) and between alpha chains (weaker) of different monomers. In terms of processing, forms F13A-mediated cross-links between a glutamine and the epsilon-amino group of a lysine residue, forming fibronectin-fibrinogen heteropolymers. Phosphorylated by FAM20C in the extracellular medium.

It localises to the secreted. Cleaved by the protease thrombin to yield monomers which, together with fibrinogen beta (FGB) and fibrinogen gamma (FGG), polymerize to form an insoluble fibrin matrix. Fibrin has a major function in hemostasis as one of the primary components of blood clots. In addition, functions during the early stages of wound repair to stabilize the lesion and guide cell migration during re-epithelialization. Was originally thought to be essential for platelet aggregation, based on in vitro studies using anticoagulated blood. However, subsequent studies have shown that it is not absolutely required for thrombus formation in vivo. Enhances expression of SELP in activated platelets via an ITGB3-dependent pathway. Maternal fibrinogen is essential for successful pregnancy. Fibrin deposition is also associated with infection, where it protects against IFNG-mediated hemorrhage. May also facilitate the immune response via both innate and T-cell mediated pathways. The sequence is that of Fibrinogen alpha chain (Fga) from Rattus norvegicus (Rat).